The chain runs to 917 residues: Dolichyl-phosphooligosaccharide-protein glycotransferase (917 aa).

Residues Met1–Asn10 show a composition bias toward basic and acidic residues. The disordered stretch occupies residues Met1–Lys20. Topologically, residues Met1–Thr38 are cytoplasmic. Residues Ser11–Lys20 show a composition bias toward low complexity. The chain crosses the membrane as a helical span at residues Ile39 to Met59. The Extracellular portion of the chain corresponds to Gly60–Asn154. The short motif at Ala82–Asp84 is the DXD motif 1 element. Asp84 is a Mn(2+) binding site. A helical membrane pass occupies residues Ala155–Val175. The Cytoplasmic segment spans residues Arg176–Asp182. Residues Ile183–Val203 form a helical membrane-spanning segment. Residues Ala204 to Thr209 are Extracellular-facing. Asp208 contributes to the Mn(2+) binding site. The DXD motif 2 signature appears at Asp208–Pro210. Residues Pro210–Tyr230 traverse the membrane as a helical segment. The Cytoplasmic portion of the chain corresponds to Ser231–Lys237. A helical transmembrane segment spans residues Ser238–Trp260. The Extracellular segment spans residues Tyr261–Tyr263. A helical membrane pass occupies residues Tyr264–Lys286. Over Tyr287–Asn308 the chain is Cytoplasmic. A helical membrane pass occupies residues Ile309–Gly329. At Val330 to Glu372 the chain is on the extracellular side. Positions Thr361–Glu364 match the TIXE motif motif. Mn(2+) is bound at residue Glu364. A helical membrane pass occupies residues Ile373–Leu393. Residues Ser394 to Lys413 lie on the Cytoplasmic side of the membrane. Residues Leu414–Ser434 traverse the membrane as a helical segment. At Lys435 to Arg438 the chain is on the extracellular side. A glycophospholipid is bound at residue Arg438. Residues Phe439–Glu459 form a helical membrane-spanning segment. Residues Gln460–Lys469 are Cytoplasmic-facing. Residues Tyr470–Tyr490 traverse the membrane as a helical segment. Over Arg491–Tyr506 the chain is Extracellular. A helical membrane pass occupies residues Val507–Ala527. The Cytoplasmic segment spans residues Glu528–Lys541. The helical transmembrane segment at Ile542–Phe562 threads the bilayer. The Extracellular portion of the chain corresponds to Tyr563 to Lys917. Residues Trp592–Asp594 are interacts with target acceptor peptide in protein substrate. Positions Trp592–Gly596 match the WWDYG motif motif. An MI motif motif is present at residues Met719–Trp726.

This sequence belongs to the STT3 family. It depends on Mn(2+) as a cofactor. Mg(2+) is required as a cofactor.

The protein resides in the cell membrane. The catalysed reaction is an archaeal dolichyl phosphooligosaccharide + [protein]-L-asparagine = an archaeal dolichyl phosphate + a glycoprotein with the oligosaccharide chain attached by N-beta-D-glycosyl linkage to a protein L-asparagine.. The protein operates within cell surface structure biogenesis; S-layer biogenesis. It participates in protein modification; protein glycosylation. In terms of biological role, oligosaccharyl transferase (OST) that catalyzes the initial transfer of a defined glycan (ManNAcGlc-2,3-diNAcAGlcNAc in M.voltae) from the lipid carrier dolichol-monophosphate to an asparagine residue within an Asn-X-Ser/Thr consensus motif in nascent polypeptide chains, the first step in protein N-glycosylation. Involved in the assembly of an N-linked disaccharide that decorates the S-layer glycoprotein and flagellins. The polypeptide is Dolichyl-phosphooligosaccharide-protein glycotransferase (Methanococcus voltae).